The primary structure comprises 206 residues: MSKKPAGKNSNRIVAAVCLAFFTGMIGMAYAAVPLYKMFCQATGYGGTTQRVEKQYAGRVLDREITVRFDANIAGVPWEFQPVQRSMTMKIGETVQAHYQATNKFDRPVTGRATFNVQPELAGPYFNKVECFCFTDTSLKPGETVDMPVLFYVDPDIVNVPELKDVKTITLSYTMFPVEKNKPVASSEPVQGTSKIISDTEANLGG.

Residues 1-12 (MSKKPAGKNSNR) lie on the Cytoplasmic side of the membrane. The chain crosses the membrane as a helical; Signal-anchor for type II membrane protein span at residues 13–35 (IVAAVCLAFFTGMIGMAYAAVPL). Topologically, residues 36–206 (YKMFCQATGY…ISDTEANLGG (171 aa)) are periplasmic. The disordered stretch occupies residues 184-206 (VASSEPVQGTSKIISDTEANLGG). The span at 188 to 206 (EPVQGTSKIISDTEANLGG) shows a compositional bias: polar residues.

Belongs to the COX11/CtaG family.

Its subcellular location is the cell inner membrane. In terms of biological role, exerts its effect at some terminal stage of cytochrome c oxidase synthesis, probably by being involved in the insertion of the copper B into subunit I. This is Cytochrome c oxidase assembly protein CtaG from Mesorhizobium japonicum (strain LMG 29417 / CECT 9101 / MAFF 303099) (Mesorhizobium loti (strain MAFF 303099)).